Consider the following 418-residue polypeptide: Thyroid hormone receptor alpha (418 aa).

Residues Met1–Ser41 are disordered. The tract at residues Met1–Pro60 is modulating. Zn(2+)-binding residues include Cys61, Cys64, Cys78, Cys81, Cys99, Cys105, Cys115, and Cys118. 2 NR C4-type zinc fingers span residues Cys61–Cys81 and Cys99–Cys123. A DNA-binding region (nuclear receptor) is located at residues Cys61–Asp135. Positions Glu171–Asp415 constitute an NR LBD domain. 3,3',5-triiodo-L-thyronine is bound by residues Arg236 and Ser285.

Belongs to the nuclear hormone receptor family. NR1 subfamily. As to expression, highest level of expression in erythrocytes. Also expressed in liver, tail, eye, muscle and skin.

It localises to the nucleus. In terms of biological role, nuclear hormone receptor that can act as a repressor or activator of transcription. High affinity receptor for thyroid hormones, including triiodothyronine and thyroxine. This Aquarana catesbeiana (American bullfrog) protein is Thyroid hormone receptor alpha (thra).